Here is a 309-residue protein sequence, read N- to C-terminus: MKLVLFLNMGGATNLQDCEVFLKNMFNDPYILGIKNRFLRKFVAWIITKARVKAMQENYKKMGGKSPLNELTQSLCNKLNLKQDEFKFDFVNLYVPPFATEILQKYTLNESDEIILFPLYPHHSCTTVTSSLEVLQNEISKQKIQAKVKTIDIFYKNELYNEMIVSHILDKKSKFDAKILIFSAHSLPQSIIDKGDLYEKHVNDHVEILKEKLKDHFDEFILAYQSKLGPVKWLEPNTSDVLANLNDKALIYPISFCIDCSETIFELGMEYKHLAKCDYDLISCPNDSDEFMEFILNSINSPLARKTSC.

Fe cation contacts are provided by H185 and E262.

The protein belongs to the ferrochelatase family.

The protein resides in the cytoplasm. It catalyses the reaction heme b + 2 H(+) = protoporphyrin IX + Fe(2+). The protein operates within porphyrin-containing compound metabolism; protoheme biosynthesis; protoheme from protoporphyrin-IX: step 1/1. In terms of biological role, catalyzes the ferrous insertion into protoporphyrin IX. This Campylobacter jejuni subsp. jejuni serotype O:23/36 (strain 81-176) protein is Ferrochelatase.